Reading from the N-terminus, the 175-residue chain is MPLRPGRCYRHFSGPAYTRKEYIPGVPQPKITKFTMGDHKKDYDFEVRLLTKQIGQIRHNALEAARVIALKQMTSMVGNETDFYLYVTKYPHHVIRENKMMAFAGADRLQDGMRLSFGKPIGTAARITKLGDLIMAIRVKKEHLEFAKKAFKVASSKLPLDTEIVVVPLKEEKTQ.

It belongs to the universal ribosomal protein uL16 family.

The chain is Large ribosomal subunit protein uL16 from Metallosphaera sedula (strain ATCC 51363 / DSM 5348 / JCM 9185 / NBRC 15509 / TH2).